Reading from the N-terminus, the 168-residue chain is uncharacterized protein (168 aa).

Residues 7-168 enclose the N-acetyltransferase domain; the sequence is ERIDTLKTGD…TAKGWPDISM (162 aa).

This is an uncharacterized protein from Azospirillum brasilense.